Consider the following 67-residue polypeptide: MAWKVSVDQDTCIGDAICASLCPDVFEMNDEGKAQPKVEIIEDEELYNCAKEAMESCPVSAITIEEA.

2 4Fe-4S ferredoxin-type domains span residues 3–31 and 36–67; these read WKVS…MNDE and PKVE…IEEA. Residues cysteine 12, aspartate 15, and cysteine 18 each coordinate [4Fe-4S] cluster. Cysteine 22 and cysteine 49 are disulfide-bonded. Position 57 (cysteine 57) interacts with [4Fe-4S] cluster.

[4Fe-4S] cluster serves as cofactor. The cofactor is [3Fe-4S] cluster.

Functionally, ferredoxins are iron-sulfur proteins that transfer electrons in a wide variety of metabolic reactions. This Pyrococcus abyssi (strain GE5 / Orsay) protein is Ferredoxin (fdxA).